A 328-amino-acid polypeptide reads, in one-letter code: Sphingolipid delta(4)-desaturase DES1-like (328 aa).

3 helical membrane passes run 50–70 (PLAF…ATLL), 78–98 (ILTV…LAIH), and 114–134 (WLGI…FQKY). The short motif at 98-102 (HELSH) is the Histidine box-1 element. The Histidine box-2 motif lies at 135 to 139 (HLEHH). Transmembrane regions (helical) follow at residues 164 to 184 (LSKS…PLFL), 192 to 212 (WEFT…YFFG), and 217 to 237 (AYLI…GHFI). Positions 266–270 (HNEHH) match the Histidine box-3 motif.

Belongs to the fatty acid desaturase type 1 family. DEGS subfamily.

The protein localises to the endoplasmic reticulum membrane. The enzyme catalyses an N-acylsphinganine + 2 Fe(II)-[cytochrome b5] + O2 + 2 H(+) = an N-acylsphing-4-enine + 2 Fe(III)-[cytochrome b5] + 2 H2O. In terms of biological role, sphingolipid-delta-4-desaturase required for the biosynthesis of delta-4-unsaturated sphingolipids and derivatives. The protein is Sphingolipid delta(4)-desaturase DES1-like of Oryza sativa subsp. japonica (Rice).